Here is a 413-residue protein sequence, read N- to C-terminus: Dual-specificity RNA methyltransferase RlmN (413 aa).

Glu-126 functions as the Proton acceptor in the catalytic mechanism. The 250-residue stretch at 132 to 381 (EEGRGTLCIS…IRTPRGRDIL (250 aa)) folds into the Radical SAM core domain. Cysteines 139 and 384 form a disulfide. Residues Cys-146, Cys-150, and Cys-153 each contribute to the [4Fe-4S] cluster site. Residues 210 to 211 (GE), Ser-242, 264 to 266 (SLH), and Asn-341 contribute to the S-adenosyl-L-methionine site. The active-site S-methylcysteine intermediate is the Cys-384.

This sequence belongs to the radical SAM superfamily. RlmN family. [4Fe-4S] cluster is required as a cofactor.

The protein localises to the cytoplasm. It carries out the reaction adenosine(2503) in 23S rRNA + 2 reduced [2Fe-2S]-[ferredoxin] + 2 S-adenosyl-L-methionine = 2-methyladenosine(2503) in 23S rRNA + 5'-deoxyadenosine + L-methionine + 2 oxidized [2Fe-2S]-[ferredoxin] + S-adenosyl-L-homocysteine. The enzyme catalyses adenosine(37) in tRNA + 2 reduced [2Fe-2S]-[ferredoxin] + 2 S-adenosyl-L-methionine = 2-methyladenosine(37) in tRNA + 5'-deoxyadenosine + L-methionine + 2 oxidized [2Fe-2S]-[ferredoxin] + S-adenosyl-L-homocysteine. Its function is as follows. Specifically methylates position 2 of adenine 2503 in 23S rRNA and position 2 of adenine 37 in tRNAs. m2A2503 modification seems to play a crucial role in the proofreading step occurring at the peptidyl transferase center and thus would serve to optimize ribosomal fidelity. The protein is Dual-specificity RNA methyltransferase RlmN of Sinorhizobium medicae (strain WSM419) (Ensifer medicae).